Consider the following 303-residue polypeptide: Heme A synthase (303 aa).

Residues 1-8 lie on the Cytoplasmic side of the membrane; sequence MFGKKNLK. The helical transmembrane segment at 9 to 29 threads the bilayer; it reads WLGVVATLMMTFVQLGGALVT. Over 30–67 the chain is Extracellular; that stretch reads KTGSADGCGSSWPLCHGALIPEFFPIDTIIELSHRAVS. Cys-37 and Cys-44 are disulfide-bonded. Glu-60 is a catalytic residue. Residue His-63 participates in heme o binding. Residues 68 to 88 traverse the membrane as a helical segment; sequence ALSLLMVLWLVITAWKHIGYI. Over 89–93 the chain is Cytoplasmic; the sequence is KEIKP. A helical transmembrane segment spans residues 94 to 114; that stretch reads LSIISVGFLLLQALIGAAAVI. The Extracellular segment spans residues 115–125; that stretch reads WQQNDYVLALH. His-125 lines the heme o pocket. The helical transmembrane segment at 126 to 146 threads the bilayer; it reads FGISLISFSSVFLITLIIFSI. Residues 147-163 are Cytoplasmic-facing; that stretch reads DQKYEADELYIKKPLRR. The helical transmembrane segment at 164-184 threads the bilayer; it reads LTWLMAIIIYCGVYTGALVRH. The Extracellular segment spans residues 185-215; sequence ADASLAYGGWPLPFHDLVPHSEQDWVQLTHR. Residue His-214 participates in heme b binding. The chain crosses the membrane as a helical span at residues 216–236; sequence IMAFIVFTIIMITYIHAVKNY. Residues 237–244 lie on the Cytoplasmic side of the membrane; that stretch reads PNNRTVHY. The helical transmembrane segment at 245–265 threads the bilayer; that stretch reads GYTAAFILVILQVITGALSIM. Over 266 to 270 the chain is Extracellular; that stretch reads TNVNL. Residues 271–291 form a helical membrane-spanning segment; that stretch reads LIALFHALFITYLFGMTTYFI. Position 276 (His-276) interacts with heme b. Residues 292 to 303 lie on the Cytoplasmic side of the membrane; it reads MLMLRSVRSDKQ.

This sequence belongs to the COX15/CtaA family. Type 1 subfamily. In terms of assembly, interacts with CtaB. Requires heme b as cofactor.

The protein localises to the cell membrane. The enzyme catalyses Fe(II)-heme o + 2 A + H2O = Fe(II)-heme a + 2 AH2. It functions in the pathway porphyrin-containing compound metabolism; heme A biosynthesis; heme A from heme O: step 1/1. Catalyzes the conversion of heme O to heme A by two successive hydroxylations of the methyl group at C8. The first hydroxylation forms heme I, the second hydroxylation results in an unstable dihydroxymethyl group, which spontaneously dehydrates, resulting in the formyl group of heme A. In Staphylococcus aureus (strain MSSA476), this protein is Heme A synthase.